The sequence spans 389 residues: MVSVSEIRKAQRAEGPATILAIGTANPANCVEQSTYPDFYFKITNSEHKTELKEKFQRMCDKSMIKRRYMYLTEEILKENPNVCEYMAPSLDARQDMVVVEVPRLGKEAAVKAIKEWGQPKSKITHLIVCTTSGVDMPGADYQLTKLLGLRPYVKRYMMYQQGCFAGGTVLRLAKDLAENNKGARVLVVCSEVTAVTFRGPSDTHLDSLVGQALFGDGAAALIVGSDPVPEIEKPIFEMVWTAQTIAPDSEGAIDGHLREAGLTFHLLKDVPGIVSKNITKALVEAFEPLGISDYNSIFWIAHPGGPAILDQVEQKLALKPEKMNATREVLSEYGNMSSACVLFILDEMRKKSTQNGLKTTGEGLEWGVLFGFGPGLTIETVVLRSVAI.

55 to 62 (KFQRMCDK) serves as a coordination point for CoA. Residue C164 is the Acyl-thioester intermediate of the active site. Substrate is bound by residues T197 and 216-217 (GD). A CoA-binding site is contributed by A308.

Belongs to the thiolase-like superfamily. Chalcone/stilbene synthases family. As to quaternary structure, homodimer.

The catalysed reaction is (E)-4-coumaroyl-CoA + 3 malonyl-CoA + 3 H(+) = 2',4,4',6'-tetrahydroxychalcone + 3 CO2 + 4 CoA. The protein operates within secondary metabolite biosynthesis; flavonoid biosynthesis. Functionally, the primary product of this enzyme is 4,2',4',6'-tetrahydroxychalcone (also termed naringenin-chalcone or chalcone) which can under specific conditions spontaneously isomerize into naringenin. The protein is Chalcone synthase 2 (CHS2) of Medicago sativa (Alfalfa).